Here is an 817-residue protein sequence, read N- to C-terminus: DNA ligase (817 aa).

NAD(+) contacts are provided by residues aspartate 45–aspartate 49, serine 94–isoleucine 95, and glutamate 131. Residue lysine 133 is the N6-AMP-lysine intermediate of the active site. NAD(+) is bound by residues arginine 154, glutamate 193, lysine 311, and lysine 335. Residues cysteine 444, cysteine 447, cysteine 462, and cysteine 468 each coordinate Zn(2+). Positions alanine 733–alanine 817 constitute a BRCT domain.

Belongs to the NAD-dependent DNA ligase family. LigA subfamily. The cofactor is Mg(2+). Mn(2+) serves as cofactor.

It carries out the reaction NAD(+) + (deoxyribonucleotide)n-3'-hydroxyl + 5'-phospho-(deoxyribonucleotide)m = (deoxyribonucleotide)n+m + AMP + beta-nicotinamide D-nucleotide.. Its function is as follows. DNA ligase that catalyzes the formation of phosphodiester linkages between 5'-phosphoryl and 3'-hydroxyl groups in double-stranded DNA using NAD as a coenzyme and as the energy source for the reaction. It is essential for DNA replication and repair of damaged DNA. The protein is DNA ligase of Ralstonia pickettii (strain 12J).